The chain runs to 233 residues: MAKLTKRMRVIREKVDGTKLYEINDAVALLKELATAKFVESVDVAVNLGIDPRKSDQNVRGATVLPHGTGREVRVAVFTQGANAEAAKAAGAELVGMDDLAEQIKAGEMNFDVVIASPDAMRVVGMLGQILGPRGLMPNPKTGTVTPNVAEAVKNAKAGQVRYRNDKNGIIHTTIGKVDFTPVQLKENLEALISALKKAKPAVAKGVYVKKVSISTTMGAGVAIDQATLDTAN.

It belongs to the universal ribosomal protein uL1 family. Part of the 50S ribosomal subunit.

Functionally, binds directly to 23S rRNA. The L1 stalk is quite mobile in the ribosome, and is involved in E site tRNA release. In terms of biological role, protein L1 is also a translational repressor protein, it controls the translation of the L11 operon by binding to its mRNA. In Shewanella sp. (strain ANA-3), this protein is Large ribosomal subunit protein uL1.